The following is a 365-amino-acid chain: MSAKRSIGDSEILKKRIPQNLKYQHIKTRLDTGNSMTKYLEKIEEIKKNYRYKKDELFKRIKVTTFAQLVLQVASVSEERESGEMTTDELQRLEDNSSVISDTEFLTDRTNGKGSPVNDSKSPIQFIDSERGEECIHTSRSTLQSVISGVGELDLGNQADKKKESLQSSSALDKPYEDCPFLLLDVRDRDSYDQCHVVGAKNYPVAMLSRTMNPFTPEILEYRNAHGKIIILYDEDERIASQAATTMCERGFENLFMLSGGLKVISQKFPQGLTTGSFPVTCLVPPTQMKSALKRTPKDPIVPAEDKWRFSSQDLEMIENHLENMLMSTSTPSRLRMDSRNSKVPSSASSARSQSSTSSHSKPWK.

The Rhodanese domain occupies 177 to 274; that stretch reads EDCPFLLLDV…ISQKFPQGLT (98 aa). The interval 327–365 is disordered; the sequence is MSTSTPSRLRMDSRNSKVPSSASSARSQSSTSSHSKPWK. Over residues 342–365 the composition is skewed to low complexity; it reads SKVPSSASSARSQSSTSSHSKPWK.

This sequence belongs to the CEP41 family.

It localises to the cytoplasm. The protein localises to the cytoskeleton. Its subcellular location is the microtubule organizing center. The protein resides in the centrosome. It is found in the cell projection. It localises to the cilium. The protein localises to the cilium basal body. In terms of biological role, required during ciliogenesis for tubulin glutamylation in cilium. Probably acts by participating in the transport of tubulin polyglutamylases between the basal body and the cilium. In Xenopus tropicalis (Western clawed frog), this protein is Centrosomal protein of 41 kDa (cep41).